The sequence spans 181 residues: MVEELIALLIMASALGMDAFSIALGMGTLGLRFSQMFKVGLTIGVFHVIMPLMGMVAGKLLSAHLGLFANWLGAGLLLWLGLVMIVSPFQEKERTFVDPSGIGLFVFALSVSLDSLSAGLSLGMVGAKMALAVVAMGVMSTVLSWLGLFIGMRFQRYVGPYSELLGGFILCGFGVKLLLPY.

A run of 6 helical transmembrane segments spans residues 5 to 25, 36 to 56, 66 to 86, 102 to 122, 130 to 150, and 158 to 178; these read LIAL…IALG, MFKV…MGMV, GLFA…VMIV, IGLF…GLSL, ALAV…GLFI, and VGPY…VKLL.

The protein belongs to the MntP (TC 9.B.29) family.

It is found in the cell membrane. Functionally, probably functions as a manganese efflux pump. This chain is Putative manganese efflux pump MntP, found in Halalkalibacterium halodurans (strain ATCC BAA-125 / DSM 18197 / FERM 7344 / JCM 9153 / C-125) (Bacillus halodurans).